The following is a 73-amino-acid chain: Biotin/lipoyl attachment protein (73 aa).

The region spanning 2–69 is the Biotinyl-binding domain; it reads TVSIQMAGNL…NEGDVLLELS (68 aa). Residue Lys35 is modified to N6-biotinyllysine; alternate. Lys35 carries the N6-lipoyllysine; alternate modification.

Post-translationally, can be both biotinylated and lipoylated on Lys-35 upon overexpression in E.coli depending on the growth medium; the nature of the modification in situ in B.subtilis is unknown.

This is Biotin/lipoyl attachment protein (yngHB) from Bacillus subtilis (strain 168).